Consider the following 203-residue polypeptide: Dual-action ribosomal maturation protein DarP (203 aa).

Disordered regions lie at residues 1–31 (MRPMTRKTRIQPIEHAVEDDDNGYDRPSKSQ) and 183–203 (GASDSDDEAAGDAGDDHDDEA). Over residues 186 to 203 (DSDDEAAGDAGDDHDDEA) the composition is skewed to acidic residues.

This sequence belongs to the DarP family.

The protein resides in the cytoplasm. In terms of biological role, member of a network of 50S ribosomal subunit biogenesis factors which assembles along the 30S-50S interface, preventing incorrect 23S rRNA structures from forming. Promotes peptidyl transferase center (PTC) maturation. The protein is Dual-action ribosomal maturation protein DarP of Burkholderia cenocepacia (strain ATCC BAA-245 / DSM 16553 / LMG 16656 / NCTC 13227 / J2315 / CF5610) (Burkholderia cepacia (strain J2315)).